The sequence spans 256 residues: MGRGRIEIKKIENINSRQVTFSKRRNGLIKKAKELSILCDAEVALIIFSSTGKIYDFSSVCMEQILSRYGYTTASTEHKQQREHQLLICASHGNEAVLRNDDSMKGELERLQLAIERLKGKELEGMSFPDLISLENQLNESLHSVKDQKTQILLNQIERSRIQEKKALEENQILRKQVEMLGRGSGPKVLNERPQDSSPEADPESSSSEEDENDNEEHHSDTSLQLGLSSTGYCTKRKKPKIELVCDNSGSQVASD.

The MADS-box domain occupies 1 to 61 (MGRGRIEIKK…GKIYDFSSVC (61 aa)). The K-box domain maps to 94–184 (NEAVLRNDDS…RKQVEMLGRG (91 aa)). Residues 179-232 (EMLGRGSGPKVLNERPQDSSPEADPESSSSEEDENDNEEHHSDTSLQLGLSSTG) are disordered. Over residues 199 to 215 (PEADPESSSSEEDENDN) the composition is skewed to acidic residues. A compositionally biased stretch (polar residues) spans 222 to 232 (TSLQLGLSSTG).

Mostly expressed in pollen, roots, flowers and siliques, and to a lower extent, in stems and leaves. Expressed in the endosperm and in developing male and female gametophytes. Also present in seedlings.

The protein resides in the nucleus. Its function is as follows. Probable transcription factor involved in the negative regulation of flowering, probably through the photoperiodic pathway. Prevents premature flowering. Downstream regulator of a subset of the MIKC* MADS-controlled genes required during pollen maturation. The sequence is that of Agamous-like MADS-box protein AGL18 (AGL18) from Arabidopsis thaliana (Mouse-ear cress).